The following is a 430-amino-acid chain: Enolase (430 aa).

Q163 is a binding site for (2R)-2-phosphoglycerate. E205 functions as the Proton donor in the catalytic mechanism. Positions 242, 288, and 315 each coordinate Mg(2+). K340, R369, S370, and K391 together coordinate (2R)-2-phosphoglycerate. Residue K340 is the Proton acceptor of the active site.

This sequence belongs to the enolase family. Mg(2+) serves as cofactor.

The protein resides in the cytoplasm. It localises to the secreted. The protein localises to the cell surface. It catalyses the reaction (2R)-2-phosphoglycerate = phosphoenolpyruvate + H2O. Its pathway is carbohydrate degradation; glycolysis; pyruvate from D-glyceraldehyde 3-phosphate: step 4/5. Its function is as follows. Catalyzes the reversible conversion of 2-phosphoglycerate (2-PG) into phosphoenolpyruvate (PEP). It is essential for the degradation of carbohydrates via glycolysis. The sequence is that of Enolase from Acidobacterium capsulatum (strain ATCC 51196 / DSM 11244 / BCRC 80197 / JCM 7670 / NBRC 15755 / NCIMB 13165 / 161).